A 122-amino-acid chain; its full sequence is Serum amyloid A-1 protein (122 aa).

An N-terminal signal peptide occupies residues M1–Q19. An important for amyloid formation region spans residues R20–A45. The disordered stretch occupies residues M87 to Y122. The span at R105–Y122 shows a compositional bias: basic and acidic residues.

Belongs to the SAA family. In terms of assembly, homohexamer; dimer of trimers. Can form amyloid fibrils after partial proteolysis; the native, undenatured protein does not form amyloid fibrils (in vitro). Apolipoprotein of the HDL complex. Binds to heparin. In terms of tissue distribution, detected in liver.

It localises to the secreted. Functionally, major acute phase protein. This chain is Serum amyloid A-1 protein (SAA1), found in Oryctolagus cuniculus (Rabbit).